We begin with the raw amino-acid sequence, 105 residues long: Large ribosomal subunit protein uL24 (105 aa).

This sequence belongs to the universal ribosomal protein uL24 family. As to quaternary structure, part of the 50S ribosomal subunit.

Functionally, one of two assembly initiator proteins, it binds directly to the 5'-end of the 23S rRNA, where it nucleates assembly of the 50S subunit. In terms of biological role, one of the proteins that surrounds the polypeptide exit tunnel on the outside of the subunit. The sequence is that of Large ribosomal subunit protein uL24 from Vibrio vulnificus (strain YJ016).